Consider the following 619-residue polypeptide: MDDQQALNSIMQDLAVLHKASRPALSLQETRKAKPSSPKKQNDVRVKFEHRGEKRILQVTRPVKLEDLRSKSKIAFGQSMDLHYTNNELVIPLTTQDDLDKAVELLDRSIHMKSLKILLVVNGSTQATNLEPSPSPEDLNNTPLGAERKKRLSVVGPPNRDRSSPPPGYIPDILHQIARNGSFTSINSEGEFIPESMDQMLDPLSLSSPENSGSGSCPSLDSPLDGESYPKSRMPRAQSYPDNHQEFTDYDNPIFEKFGKGGTYPRRYHVSYHHQEYNDGRKTFPRARRTQGTSFRSPVSFSPTDHSLSTSSGSSVFTPEYDDSRIRRRGSDIDNPTLTVTDISPPSRSPRAPTNWRLGKLLGQGAFGRVYLCYDVDTGRELAVKQVQFNPESPETSKEVNALECEIQLLKNLLHERIVQYYGCLRDPQEKTLSIFMELSPGGSIKDQLKAYGALTENVTRKYTRQILEGVHYLHSNMIVHRDIKGANILRDSTGNIKLGDFGASKRLQTICLSGTGMKSVTGTPYWMSPEVISGEGYGRKADIWSVACTVVEMLTEKPPWAEFEAMAAIFKIATQPTNPKLPPHVSDYTRDFLKRIFVEAKLRPSAEELLRHMFVHYH.

Disordered regions lie at residues 25-44 (LSLQ…QNDV), 126-168 (QATN…PPPG), 201-245 (LDPL…DNHQ), and 289-355 (RTQG…APTN). A Phosphoserine modification is found at serine 26. Positions 43-122 (DVRVKFEHRG…KSLKILLVVN (80 aa)) constitute a PB1 domain. Residues 126–143 (QATNLEPSPSPEDLNNTP) are compositionally biased toward polar residues. A phosphoserine mark is found at serine 153 and serine 164. The span at 203 to 219 (PLSLSSPENSGSGSCPS) shows a compositional bias: low complexity. Phosphoserine occurs at positions 239, 297, 311, 331, 344, and 349. Positions 290-299 (TQGTSFRSPV) are enriched in polar residues. The segment covering 300 to 315 (SFSPTDHSLSTSSGSS) has biased composition (low complexity). A compositionally biased stretch (basic and acidic residues) spans 322–332 (DDSRIRRRGSD). Polar residues predominate over residues 336–346 (PTLTVTDISPP). Positions 356-616 (WRLGKLLGQG…AEELLRHMFV (261 aa)) constitute a Protein kinase domain. Residues 362–370 (LGQGAFGRV) and lysine 385 contribute to the ATP site. Aspartate 483 (proton acceptor) is an active-site residue.

This sequence belongs to the protein kinase superfamily. STE Ser/Thr protein kinase family. MAP kinase kinase kinase subfamily. Self-associates. Binds both upstream activators and downstream substrates in multimolecular complexes. Interacts (via the kinase catalytic domain) with STK38. Interacts with XIAP/BIRC4. Mg(2+) is required as a cofactor. In terms of processing, ubiquitination by XIAP/BIRC4 does not lead to proteasomal degradation. Autophosphorylated.

It is found in the cytoplasm. It localises to the nucleus. It catalyses the reaction L-seryl-[protein] + ATP = O-phospho-L-seryl-[protein] + ADP + H(+). The enzyme catalyses L-threonyl-[protein] + ATP = O-phospho-L-threonyl-[protein] + ADP + H(+). With respect to regulation, activated by phosphorylation on Thr-524. Interacts with PKN2; the interaction activates PKN2 kinase activity in a MAP3K2-independent kinase activity. Component of a protein kinase signal transduction cascade. Regulates the JNK and ERK5 pathways by phosphorylating and activating MAP2K5 and MAP2K7. Plays a role in caveolae kiss-and-run dynamics. In Mus musculus (Mouse), this protein is Mitogen-activated protein kinase kinase kinase 2 (Map3k2).